Consider the following 158-residue polypeptide: Lectin-like protein EP153R (158 aa).

Over M1–L26 the chain is Cytoplasmic. A helical transmembrane segment spans residues I27–G47. Residues D48–N158 lie on the Extracellular side of the membrane. A disulfide bond links C61 and C72. Residues C61–S157 are lectin-like. N81, N94, N100, N106, N112, N119, and N139 each carry an N-linked (GlcNAc...) asparagine; by host glycan.

This sequence belongs to the asfivirus lectin-like protein family. As to quaternary structure, homodimer.

The protein resides in the host endoplasmic reticulum membrane. In terms of biological role, down-regulates MHC-I expression by impairing the appropriate configuration or presentation into the plasma membrane of the latter. Participates in viral hemadsorption, which may help viral spread. Reduces the transactivating activity of host TP53, thus inhibiting apoptosis. Non-essential for virus growth in swine macrophage cell cultures. This is Lectin-like protein EP153R from African swine fever virus (isolate Pig/Kenya/KEN-50/1950) (ASFV).